A 243-amino-acid polypeptide reads, in one-letter code: tRNA pseudouridine synthase A (243 aa).

Asp54 serves as the catalytic Nucleophile. Tyr112 contributes to the substrate binding site.

Belongs to the tRNA pseudouridine synthase TruA family. Homodimer.

It catalyses the reaction uridine(38/39/40) in tRNA = pseudouridine(38/39/40) in tRNA. Its function is as follows. Formation of pseudouridine at positions 38, 39 and 40 in the anticodon stem and loop of transfer RNAs. This chain is tRNA pseudouridine synthase A, found in Aster yellows witches'-broom phytoplasma (strain AYWB).